A 633-amino-acid polypeptide reads, in one-letter code: MADSLDHAPAQANNLPQFLALTIGAIGVVYGDIGTSPLYAFREALRPFGPGGVGRDEVIGLVSLVLWTLTAIVTIKYVLFLLRADNDGEGGTLSLLALLLKKGTKYPVLMFFAGVLGAALFIGDAMITPALSVLSAVEGLKLVAPALHDYVLPISVVIILLLFAVQSRGTGAVSVFFGPITLVWFLMMAAAGVAHIGDDLAILSAFNPLNAIGFLWNAGLIGFIVLGAIFLTVTGAEALYADLGHFGRHSIQAAWFAVVFPALALNYLGQGALVLSHPDAISNPFFLMFPNWALLPMVILATAATIIASQSVITGAFSLIRQAIHLGFLPRFEICYTSETQTGQIYLPLVNTILLTGVLALMLMFGSSEALAPAYGVSITGAMVIDTILAFEFVRRQWGWPALTAIAVLLPLFNLELVFLGANLLKVHHGGYVPILIAGTLITMMWTWRKGVSVLREKTARQDIPLSQFMAIVERKSEHAPVQVPGTAIFLTATPDTTPAVLLHNIKHNHVLHQHNVIMTIKTARVPYVPEKDRYTITKLSDRFSLLELRFGFMDDQNVSRALARCRKEGFKFEIMSTSFYLGRRKLIADPQSGLPQWQDKLFIAMADSAIDPTEYFHLPANRVVELGEQVII.

Helical transmembrane passes span 18 to 38 (FLALTIGAIGVVYGDIGTSPL), 61 to 81 (LVSLVLWTLTAIVTIKYVLFL), 107 to 127 (PVLMFFAGVLGAALFIGDAMI), 143 to 163 (VAPALHDYVLPISVVIILLLF), 173 to 193 (VSVFFGPITLVWFLMMAAAGV), 211 to 231 (AIGFLWNAGLIGFIVLGAIFL), 255 to 275 (WFAVVFPALALNYLGQGALVL), 287 to 307 (LMFPNWALLPMVILATAATII), 345 to 365 (IYLPLVNTILLTGVLALMLMF), 371 to 391 (LAPAYGVSITGAMVIDTILAF), 402 to 422 (ALTAIAVLLPLFNLELVFLGA), and 427 to 447 (VHHGGYVPILIAGTLITMMWT).

This sequence belongs to the HAK/KUP transporter (TC 2.A.72) family.

It localises to the cell inner membrane. The enzyme catalyses K(+)(in) + H(+)(in) = K(+)(out) + H(+)(out). Transport of potassium into the cell. Likely operates as a K(+):H(+) symporter. The polypeptide is Probable potassium transport system protein Kup 2 (Rhizobium meliloti (strain 1021) (Ensifer meliloti)).